Consider the following 484-residue polypeptide: Nuclear rim protein 1 (484 aa).

Ser3 carries the post-translational modification Phosphoserine. 2 helical membrane passes run 145–165 and 252–272; these read FTIF…MFGY and TAIV…AIVF. Positions 416–458 are disordered; the sequence is SSNENLEKGGAFLPNQDQNRPSKSLSPLRKTPLSARQKRFEGS. At Ser417 the chain carries Phosphoserine. Positions 430–440 are enriched in polar residues; it reads NQDQNRPSKSL. Ser474 bears the Phosphoserine mark.

Belongs to the NUR1 family. As to quaternary structure, interacts with CSM1.

It is found in the nucleus membrane. Member of a perinuclear network that controls recombination at multiple loci to maintain genome stability. Required for rDNA repeat stability. This is Nuclear rim protein 1 (NUR1) from Saccharomyces cerevisiae (strain YJM789) (Baker's yeast).